Consider the following 558-residue polypeptide: CTP synthase (558 aa).

The amidoligase domain stretch occupies residues 1–271; sequence MAARQQTKHL…DAYVVRRLGL (271 aa). S18 contributes to the CTP binding site. S18 contributes to the UTP binding site. ATP-binding positions include 19–24 and D76; that span reads SLGKGL. Residues D76 and E145 each coordinate Mg(2+). CTP is bound by residues 152–154, 192–197, and K228; these read DIE and KTKPTQ. UTP contacts are provided by residues 192 to 197 and K228; that span reads KTKPTQ. Residues 296-545 form the Glutamine amidotransferase type-1 domain; it reads TIALVGKYVD…IRAALLHRCP (250 aa). Residue G359 coordinates L-glutamine. C386 (nucleophile; for glutamine hydrolysis) is an active-site residue. L-glutamine is bound by residues 387–390, E410, and R471; that span reads LGLQ. Residues H518 and E520 contribute to the active site.

It belongs to the CTP synthase family. Homotetramer.

It carries out the reaction UTP + L-glutamine + ATP + H2O = CTP + L-glutamate + ADP + phosphate + 2 H(+). The catalysed reaction is L-glutamine + H2O = L-glutamate + NH4(+). It catalyses the reaction UTP + NH4(+) + ATP = CTP + ADP + phosphate + 2 H(+). It participates in pyrimidine metabolism; CTP biosynthesis via de novo pathway; CTP from UDP: step 2/2. Allosterically activated by GTP, when glutamine is the substrate; GTP has no effect on the reaction when ammonia is the substrate. The allosteric effector GTP functions by stabilizing the protein conformation that binds the tetrahedral intermediate(s) formed during glutamine hydrolysis. Inhibited by the product CTP, via allosteric rather than competitive inhibition. Its function is as follows. Catalyzes the ATP-dependent amination of UTP to CTP with either L-glutamine or ammonia as the source of nitrogen. Regulates intracellular CTP levels through interactions with the four ribonucleotide triphosphates. The chain is CTP synthase from Acidothermus cellulolyticus (strain ATCC 43068 / DSM 8971 / 11B).